The chain runs to 229 residues: Cytosolic-abundant heat soluble protein 107838 (229 aa).

Residues 1–29 are disordered; the sequence is MSAEAMNMNMNQDAVFIPPPEGEQYERKE. Residues 109 to 145 adopt a coiled-coil conformation; the sequence is LSANYQKEVERKTEAYRKQQEVEADKIRKELEKQHLR. CAHS motif stretches follow at residues 124–142 and 161–179; these read YRKQ…LEKQ and QKKM…MDRE. Positions 202–218 are enriched in polar residues; that stretch reads SSAAGTETGGQVVSESQ. Residues 202 to 229 are disordered; that stretch reads SSAAGTETGGQVVSESQKFTERNRQIKQ. The span at 219-229 shows a compositional bias: basic and acidic residues; sequence KFTERNRQIKQ.

The protein belongs to the Cytosolic-abundant heat soluble protein (CAHS) family.

The protein localises to the cytoplasm. In terms of biological role, CAHS proteins are cytosolic heat soluble proteins that seem to contribute to the anhydrobiosis in tardigrades, but their specific mechanisms are yet to be identified. It is possible that protection during anhydrobiosis might occur via the stabilization of vitrifying small molecules such as sugars, but not via the direct glass transition of CAHS proteins themselves. In Paramacrobiotus richtersi (Water bear), this protein is Cytosolic-abundant heat soluble protein 107838.